A 651-amino-acid polypeptide reads, in one-letter code: Acetyl-coenzyme A synthetase 1 (651 aa).

CoA contacts are provided by residues Arg-191–Lys-194, Thr-311, and Asn-335. Residues Gly-387–Pro-389, Asp-411–Thr-416, Asp-500, and Arg-515 each bind ATP. Ser-523 lines the CoA pocket. ATP is bound at residue Arg-526. Mg(2+)-binding residues include Val-537, His-539, and Val-542. Arg-584 is a binding site for CoA. Lys-609 carries the N6-acetyllysine modification.

This sequence belongs to the ATP-dependent AMP-binding enzyme family. Mg(2+) is required as a cofactor. In terms of processing, acetylated. Deacetylation by the SIR2-homolog deacetylase activates the enzyme.

It carries out the reaction acetate + ATP + CoA = acetyl-CoA + AMP + diphosphate. Functionally, catalyzes the conversion of acetate into acetyl-CoA (AcCoA), an essential intermediate at the junction of anabolic and catabolic pathways. AcsA undergoes a two-step reaction. In the first half reaction, AcsA combines acetate with ATP to form acetyl-adenylate (AcAMP) intermediate. In the second half reaction, it can then transfer the acetyl group from AcAMP to the sulfhydryl group of CoA, forming the product AcCoA. The polypeptide is Acetyl-coenzyme A synthetase 1 (Pseudomonas aeruginosa (strain ATCC 15692 / DSM 22644 / CIP 104116 / JCM 14847 / LMG 12228 / 1C / PRS 101 / PAO1)).